An 86-amino-acid chain; its full sequence is Small ribosomal subunit protein bS20 (86 aa).

Belongs to the bacterial ribosomal protein bS20 family.

In terms of biological role, binds directly to 16S ribosomal RNA. The protein is Small ribosomal subunit protein bS20 of Kineococcus radiotolerans (strain ATCC BAA-149 / DSM 14245 / SRS30216).